The chain runs to 226 residues: Ribonuclease 3 (226 aa).

The RNase III domain maps to 5 to 127 (TFQRGDPIGH…IVAAIYLDCG (123 aa)). Glutamate 40 is a Mg(2+) binding site. Aspartate 44 is a catalytic residue. Mg(2+) is bound by residues aspartate 113 and glutamate 116. Residue glutamate 116 is part of the active site. In terms of domain architecture, DRBM spans 154 to 224 (DPKTRLQEWL…ATLVIAQLDS (71 aa)).

The protein belongs to the ribonuclease III family. Homodimer. The cofactor is Mg(2+).

It localises to the cytoplasm. It catalyses the reaction Endonucleolytic cleavage to 5'-phosphomonoester.. Functionally, digests double-stranded RNA. Involved in the processing of primary rRNA transcript to yield the immediate precursors to the large and small rRNAs (23S and 16S). Processes some mRNAs, and tRNAs when they are encoded in the rRNA operon. Processes pre-crRNA and tracrRNA of type II CRISPR loci if present in the organism. The polypeptide is Ribonuclease 3 (Xanthomonas axonopodis pv. citri (strain 306)).